We begin with the raw amino-acid sequence, 633 residues long: tRNA uridine 5-carboxymethylaminomethyl modification enzyme MnmG (633 aa).

FAD is bound at residue 18–23 (GAGHAG). The interval 208-232 (PRVNGNTIDFDKTEEQPGDKTPNHF) is disordered. Basic and acidic residues predominate over residues 216–229 (DFDKTEEQPGDKTP). NAD(+) is bound at residue 279-293 (GPRYCPSIEDKIVRF).

Belongs to the MnmG family. Homodimer. Heterotetramer of two MnmE and two MnmG subunits. Requires FAD as cofactor.

The protein localises to the cytoplasm. In terms of biological role, NAD-binding protein involved in the addition of a carboxymethylaminomethyl (cmnm) group at the wobble position (U34) of certain tRNAs, forming tRNA-cmnm(5)s(2)U34. This Lacticaseibacillus paracasei (strain ATCC 334 / BCRC 17002 / CCUG 31169 / CIP 107868 / KCTC 3260 / NRRL B-441) (Lactobacillus paracasei) protein is tRNA uridine 5-carboxymethylaminomethyl modification enzyme MnmG.